The primary structure comprises 614 residues: NEDD8 ultimate buster 1 (614 aa).

Coiled coils occupy residues 36-71 (LAVK…IERG) and 151-206 (NVKA…MVVD). UBA domains are found at residues 373 to 413 (YIDP…ISNR), 423 to 469 (EEKE…LLSN), and 488 to 528 (SPSQ…LAHH). The Nuclear localization signal motif lies at 413-430 (RREELAQIRKEEKEKRRR). The interval 426–473 (EKRRRRLENVNTLRGMGYSTQAAKQALHQARGNLDDALKVLLSNPHMW) is NEDD8-binding 1. Positions 531–590 (SLPPDLQFSGEDSSPTPSTSPSDSAGTSSASTDEDMETEAVNEILEDIPEHEEDYLDSTL) are disordered. The span at 539-561 (SGEDSSPTPSTSPSDSAGTSSAS) shows a compositional bias: low complexity. The interval 549-597 (TSPSDSAGTSSASTDEDMETEAVNEILEDIPEHEEDYLDSTLEDEEVII) is NEDD8-binding 2. The segment covering 562–590 (TDEDMETEAVNEILEDIPEHEEDYLDSTL) has biased composition (acidic residues).

In terms of assembly, directly interacts with NEDD8 and PSMD4/S5a, a member of the regulatory subunit of the 26S proteasome. Interacts with AIPL1. The interaction with UBD via UBA domains facilitates the linking of UBD-conjugated target protein to the proteasome complex and accelerates UBD degradation and that of its conjugates.

Its subcellular location is the nucleus. In terms of biological role, specific down-regulator of the NEDD8 conjugation system. Recruits NEDD8, UBD, and their conjugates to the proteasome for degradation. The polypeptide is NEDD8 ultimate buster 1 (Nub1) (Mus musculus (Mouse)).